We begin with the raw amino-acid sequence, 121 residues long: Small ribosomal subunit protein uS13 (121 aa).

Residues 92-121 form a disordered region; that stretch reads RKGLPMRGQRTRTNARTRKGPRRAAQALKK.

This sequence belongs to the universal ribosomal protein uS13 family. Part of the 30S ribosomal subunit. Forms a loose heterodimer with protein S19. Forms two bridges to the 50S subunit in the 70S ribosome.

In terms of biological role, located at the top of the head of the 30S subunit, it contacts several helices of the 16S rRNA. In the 70S ribosome it contacts the 23S rRNA (bridge B1a) and protein L5 of the 50S subunit (bridge B1b), connecting the 2 subunits; these bridges are implicated in subunit movement. Contacts the tRNAs in the A and P-sites. This chain is Small ribosomal subunit protein uS13, found in Burkholderia thailandensis (strain ATCC 700388 / DSM 13276 / CCUG 48851 / CIP 106301 / E264).